Reading from the N-terminus, the 240-residue chain is 1-(5-phosphoribosyl)-5-[(5-phosphoribosylamino)methylideneamino] imidazole-4-carboxamide isomerase (240 aa).

The active-site Proton acceptor is the D8. Residue D129 is the Proton donor of the active site.

It belongs to the HisA/HisF family.

It localises to the cytoplasm. The enzyme catalyses 1-(5-phospho-beta-D-ribosyl)-5-[(5-phospho-beta-D-ribosylamino)methylideneamino]imidazole-4-carboxamide = 5-[(5-phospho-1-deoxy-D-ribulos-1-ylimino)methylamino]-1-(5-phospho-beta-D-ribosyl)imidazole-4-carboxamide. The protein operates within amino-acid biosynthesis; L-histidine biosynthesis; L-histidine from 5-phospho-alpha-D-ribose 1-diphosphate: step 4/9. The protein is 1-(5-phosphoribosyl)-5-[(5-phosphoribosylamino)methylideneamino] imidazole-4-carboxamide isomerase of Listeria monocytogenes serotype 4a (strain HCC23).